A 477-amino-acid chain; its full sequence is P3 protein (477 aa).

A disordered region spans residues 1-21 (MVFRSGEGHSLQWPGPEGGTG). Helical transmembrane passes span 225 to 245 (PMLL…FLMA), 253 to 273 (ALAL…SYLF), 281 to 301 (VTLA…FLPL), 320 to 340 (VSKI…GVVI), 361 to 381 (VLLL…LAGV), 383 to 403 (LPIV…GYGL), 417 to 437 (VSIE…QLSL), and 450 to 470 (FLVA…HFIY).

This sequence belongs to the bile acid:sodium symporter (BASS) (TC 2.A.28) family.

It is found in the membrane. In terms of biological role, the ubiquitous expression and the conservation of the sequence in distant animal species suggest that the gene codes for a protein with housekeeping functions. This chain is P3 protein (SLC10A3), found in Bos taurus (Bovine).